A 557-amino-acid polypeptide reads, in one-letter code: Glypican-4 (557 aa).

A signal peptide spans M1–A18. S357 carries the post-translational modification Phosphoserine. Residues S494, S498, and S500 are each glycosylated (O-linked (Xyl...) (glycosaminoglycan) serine). N514 carries an N-linked (GlcNAc...) asparagine glycan. Residue S529 is the site of GPI-anchor amidated serine attachment. Positions A530–R557 are cleaved as a propeptide — removed in mature form.

The protein belongs to the glypican family. As to expression, highly expressed in developing brain and kidney.

The protein localises to the cell membrane. Its subcellular location is the secreted. It localises to the extracellular space. Cell surface proteoglycan that bears heparan sulfate. May be involved in the development of kidney tubules and of the central nervous system. The chain is Glypican-4 (Gpc4) from Mus musculus (Mouse).